Consider the following 131-residue polypeptide: Sec-independent protein translocase protein TatB (131 aa).

A helical membrane pass occupies residues 2-22 (FDGIGFMELLLIGILGLVVLG). Composition is skewed to polar residues over residues 68 to 83 (ESQG…QDSI) and 116 to 131 (AEKS…KPNG). Residues 68–131 (ESQGLKNLSP…TGANSDKPNG (64 aa)) form a disordered region.

Belongs to the TatB family. The Tat system comprises two distinct complexes: a TatABC complex, containing multiple copies of TatA, TatB and TatC subunits, and a separate TatA complex, containing only TatA subunits. Substrates initially bind to the TatABC complex, which probably triggers association of the separate TatA complex to form the active translocon.

Its subcellular location is the cell inner membrane. Functionally, part of the twin-arginine translocation (Tat) system that transports large folded proteins containing a characteristic twin-arginine motif in their signal peptide across membranes. Together with TatC, TatB is part of a receptor directly interacting with Tat signal peptides. TatB may form an oligomeric binding site that transiently accommodates folded Tat precursor proteins before their translocation. The polypeptide is Sec-independent protein translocase protein TatB (Shewanella pealeana (strain ATCC 700345 / ANG-SQ1)).